Here is a 161-residue protein sequence, read N- to C-terminus: tRNA-specific adenosine deaminase (161 aa).

The CMP/dCMP-type deaminase domain occupies 2 to 120; sequence TQDELYMKEA…GTLMNLLQEE (119 aa). Histidine 53 serves as a coordination point for Zn(2+). The Proton donor role is filled by glutamate 55. Residues cysteine 83 and cysteine 86 each coordinate Zn(2+).

The protein belongs to the cytidine and deoxycytidylate deaminase family. Homodimer. It depends on Zn(2+) as a cofactor.

The enzyme catalyses adenosine(34) in tRNA + H2O + H(+) = inosine(34) in tRNA + NH4(+). Functionally, catalyzes the deamination of adenosine to inosine at the wobble position 34 of tRNA(Arg2). In Bacillus subtilis (strain 168), this protein is tRNA-specific adenosine deaminase.